We begin with the raw amino-acid sequence, 123 residues long: Galanin peptides (123 aa).

Residues 1-19 (MPRGCALLLASLLLASALS) form the signal peptide. The propeptide occupies 20-30 (ATLGLGSPVKE). At A61 the chain carries Alanine amide. Phosphoserine is present on residues S116 and S117.

The protein belongs to the galanin family.

It localises to the secreted. In terms of biological role, endocrine hormone of the central and peripheral nervous systems that binds and activates the G protein-coupled receptors GALR1, GALR2, and GALR3. This small neuropeptide may regulate diverse physiologic functions including contraction of smooth muscle of the gastrointestinal and genitourinary tract, growth hormone and insulin release and adrenal secretion. The polypeptide is Galanin peptides (GAL) (Sus scrofa (Pig)).